Here is a 195-residue protein sequence, read N- to C-terminus: Penicillin-binding protein activator LpoB (195 aa).

An N-terminal signal peptide occupies residues 1–16; the sequence is MKKRALIVLAALVLAS. Residue cysteine 17 is the site of N-palmitoyl cysteine attachment. Residue cysteine 17 is the site of S-diacylglycerol cysteine attachment. Positions 19–51 are disordered; that stretch reads SRKPASPPAPIEPVPPPVTVSVQPPPPATSEPV. The span at 23-51 shows a compositional bias: pro residues; that stretch reads ASPPAPIEPVPPPVTVSVQPPPPATSEPV.

It belongs to the LpoB family. As to quaternary structure, interacts with PBP1b.

The protein localises to the cell outer membrane. Its function is as follows. Regulator of peptidoglycan synthesis that is essential for the function of penicillin-binding protein 1B (PBP1b). The chain is Penicillin-binding protein activator LpoB from Sodalis glossinidius (strain morsitans).